The following is a 216-amino-acid chain: Major fimbrial subunit (216 aa).

The signal sequence occupies residues 1 to 20 (MKKTLLGSLILLAFAGNVQA). A disulfide bond links C41 and C81.

The protein belongs to the fimbrial protein family.

It is found in the fimbrium. Mediates adherence to oropharyngeal epithelial cells. Helps the airway colonization process. The sequence is that of Major fimbrial subunit (hifA) from Haemophilus influenzae.